The following is a 397-amino-acid chain: 1-deoxy-D-xylulose 5-phosphate reductoisomerase (397 aa).

Residues Thr10, Gly11, Ser12, Ile13, Asn39, and Asn125 each coordinate NADPH. Residue Lys126 coordinates 1-deoxy-D-xylulose 5-phosphate. Glu127 provides a ligand contact to NADPH. Asp151 contacts Mn(2+). 1-deoxy-D-xylulose 5-phosphate contacts are provided by Ser152, Glu153, Ser187, and His210. Residue Glu153 coordinates Mn(2+). NADPH is bound at residue Gly216. 1-deoxy-D-xylulose 5-phosphate-binding residues include Ser223, Asn228, Lys229, and Glu232. Glu232 is a binding site for Mn(2+).

This sequence belongs to the DXR family. Homodimer. Requires Mg(2+) as cofactor. Mn(2+) serves as cofactor.

The enzyme catalyses 2-C-methyl-D-erythritol 4-phosphate + NADP(+) = 1-deoxy-D-xylulose 5-phosphate + NADPH + H(+). It participates in isoprenoid biosynthesis; isopentenyl diphosphate biosynthesis via DXP pathway; isopentenyl diphosphate from 1-deoxy-D-xylulose 5-phosphate: step 1/6. In terms of biological role, catalyzes the NADPH-dependent rearrangement and reduction of 1-deoxy-D-xylulose-5-phosphate (DXP) to 2-C-methyl-D-erythritol 4-phosphate (MEP). This chain is 1-deoxy-D-xylulose 5-phosphate reductoisomerase, found in Wigglesworthia glossinidia brevipalpis.